A 753-amino-acid polypeptide reads, in one-letter code: 5-methyltetrahydropteroyltriglutamate--homocysteine methyltransferase (753 aa).

Residues 17–20 (RELK) and Lys117 contribute to the 5-methyltetrahydropteroyltri-L-glutamate site. Residues 431–433 (IGS) and Glu484 contribute to the L-homocysteine site. Residues 431 to 433 (IGS) and Glu484 contribute to the L-methionine site. Residues 515 to 516 (RC) and Trp561 contribute to the 5-methyltetrahydropteroyltri-L-glutamate site. Asp599 lines the L-homocysteine pocket. Asp599 is a binding site for L-methionine. 5-methyltetrahydropteroyltri-L-glutamate is bound at residue Glu605. Residues His641, Cys643, and Glu665 each contribute to the Zn(2+) site. His694 functions as the Proton donor in the catalytic mechanism. A Zn(2+)-binding site is contributed by Cys726.

Belongs to the vitamin-B12 independent methionine synthase family. Zn(2+) serves as cofactor.

It carries out the reaction 5-methyltetrahydropteroyltri-L-glutamate + L-homocysteine = tetrahydropteroyltri-L-glutamate + L-methionine. Its pathway is amino-acid biosynthesis; L-methionine biosynthesis via de novo pathway; L-methionine from L-homocysteine (MetE route): step 1/1. Its function is as follows. Catalyzes the transfer of a methyl group from 5-methyltetrahydrofolate to homocysteine resulting in methionine formation. This is 5-methyltetrahydropteroyltriglutamate--homocysteine methyltransferase from Escherichia coli (strain SMS-3-5 / SECEC).